A 62-amino-acid polypeptide reads, in one-letter code: Large ribosomal subunit protein bL28 (62 aa).

The segment at 1 to 27 (MAKECVITGRKSRSGNKRSHAMNSSKR) is disordered. Residues 10-20 (RKSRSGNKRSH) show a composition bias toward basic residues.

It belongs to the bacterial ribosomal protein bL28 family.

The polypeptide is Large ribosomal subunit protein bL28 (Listeria innocua serovar 6a (strain ATCC BAA-680 / CLIP 11262)).